The primary structure comprises 384 residues: S-adenosylmethionine synthase (384 aa).

H15 lines the ATP pocket. D17 is a Mg(2+) binding site. E43 contacts K(+). Positions 56 and 99 each coordinate L-methionine. Positions 99-109 (QSPDINQGVDR) are flexible loop. Residues 164–166 (DAK), 230–231 (RF), D239, 245–246 (RK), A262, and K266 contribute to the ATP site. Position 239 (D239) interacts with L-methionine. K270 serves as a coordination point for L-methionine.

The protein belongs to the AdoMet synthase family. As to quaternary structure, homotetramer; dimer of dimers. The cofactor is Mg(2+). It depends on K(+) as a cofactor.

The protein resides in the cytoplasm. The enzyme catalyses L-methionine + ATP + H2O = S-adenosyl-L-methionine + phosphate + diphosphate. It participates in amino-acid biosynthesis; S-adenosyl-L-methionine biosynthesis; S-adenosyl-L-methionine from L-methionine: step 1/1. Functionally, catalyzes the formation of S-adenosylmethionine (AdoMet) from methionine and ATP. The overall synthetic reaction is composed of two sequential steps, AdoMet formation and the subsequent tripolyphosphate hydrolysis which occurs prior to release of AdoMet from the enzyme. This is S-adenosylmethionine synthase from Erwinia tasmaniensis (strain DSM 17950 / CFBP 7177 / CIP 109463 / NCPPB 4357 / Et1/99).